A 37-amino-acid polypeptide reads, in one-letter code: Large ribosomal subunit protein bL36c (37 aa).

This sequence belongs to the bacterial ribosomal protein bL36 family.

Its subcellular location is the plastid. The protein localises to the chloroplast. The protein is Large ribosomal subunit protein bL36c of Chaetosphaeridium globosum (Charophycean green alga).